We begin with the raw amino-acid sequence, 209 residues long: Large ribosomal subunit protein bL9 (209 aa).

A disordered region spans residues 184 to 209; that stretch reads SAASEDSDLVETPEDRATEEAEDEQP.

Belongs to the bacterial ribosomal protein bL9 family.

Binds to the 23S rRNA. The polypeptide is Large ribosomal subunit protein bL9 (Dinoroseobacter shibae (strain DSM 16493 / NCIMB 14021 / DFL 12)).